The following is a 662-amino-acid chain: DNA topoisomerase 4 subunit B (662 aa).

Residues tyrosine 20, asparagine 60, aspartate 87, 129 to 135 (GLHGVGI), and lysine 359 each bind ATP. A Toprim domain is found at 439–553 (TELFIVEGDS…EGHLYLAKPP (115 aa)). Residues glutamate 445, aspartate 518, and aspartate 520 each contribute to the Mg(2+) site.

The protein belongs to the type II topoisomerase family. ParE type 1 subfamily. As to quaternary structure, heterotetramer composed of ParC and ParE. It depends on Mg(2+) as a cofactor. Mn(2+) is required as a cofactor. Requires Ca(2+) as cofactor.

The enzyme catalyses ATP-dependent breakage, passage and rejoining of double-stranded DNA.. Its function is as follows. Topoisomerase IV is essential for chromosome segregation. It relaxes supercoiled DNA. Performs the decatenation events required during the replication of a circular DNA molecule. This chain is DNA topoisomerase 4 subunit B, found in Rickettsia prowazekii (strain Madrid E).